Here is a 362-residue protein sequence, read N- to C-terminus: Microfibril-associated glycoprotein 3 (362 aa).

Positions 1–19 (MKLHCCLFTLVASIIVPAA) are cleaved as a signal peptide. The Extracellular segment spans residues 20–146 (FVLEDVDFNQ…TLRVIFTSGD (127 aa)). Residues Asn-36, Asn-41, and Asn-110 are each glycosylated (N-linked (GlcNAc...) asparagine). One can recognise an Ig-like C2-type domain in the interval 45–137 (PSSFELSASS…SPIRASYSVT (93 aa)). Cys-73 and Cys-124 are oxidised to a cystine. A helical transmembrane segment spans residues 147–167 (MSVYYMIVCLIAFTITLILNV). The Cytoplasmic segment spans residues 168–362 (TRLCMMSSHL…KDGAYENSQL (195 aa)). Disordered stretches follow at residues 282 to 306 (GIYVINPEMGRSNSPGGDSDDGSLN) and 319 to 362 (HLQS…NSQL). The segment covering 319 to 337 (HLQSETKSIDTESQGSSHF) has biased composition (polar residues).

In terms of processing, glycosylated.

The protein resides in the cell membrane. Component of the elastin-associated microfibrils. This chain is Microfibril-associated glycoprotein 3 (MFAP3), found in Pongo abelii (Sumatran orangutan).